Reading from the N-terminus, the 603-residue chain is Spastin (603 aa).

The tract at residues 1–34 is disordered; it reads MNSPGGRNNKKKPVTPAAETGPGPPTPPPPPAET. Residues 1–54 are Cytoplasmic-facing; it reads MNSPGGRNNKKKPVTPAAETGPGPPTPPPPPAETQVLLAPPSLHKRNLYLFSYP. The segment covering 22 to 32 has biased composition (pro residues); sequence PGPPTPPPPPA. Residues 55–75 constitute an intramembrane region (helical); it reads LLAAFSLLRFLAFQLGLLFVW. Over 76–603 the chain is Cytoplasmic; sequence FCERLSRRVM…WNKEFGDTTV (528 aa). The 76-residue stretch at 113 to 188 folds into the MIT domain; sequence YHQQAFQYIS…LMAKDRLQLL (76 aa). The interval 216 to 294 is disordered; the sequence is GLLKPEKGAV…RTNKPTTPTT (79 aa). The span at 219–231 shows a compositional bias: basic and acidic residues; that stretch reads KPEKGAVPKKKDP. A compositionally biased stretch (low complexity) spans 281-294; it reads KNNTRTNKPTTPTT. 369–376 is a binding site for ATP; that stretch reads GPPGNGKT.

It belongs to the AAA ATPase family. Spastin subfamily. As to quaternary structure, homohexamer. The homohexamer is stabilized by ATP-binding. The homohexamer may adopt a ring conformation through which microtubules pass prior to being severed. Interacts with microtubules.

The protein localises to the membrane. It is found in the cytoplasm. It localises to the cytoskeleton. Its subcellular location is the microtubule organizing center. The protein resides in the centrosome. The protein localises to the perinuclear region. It is found in the nucleus. It carries out the reaction n ATP + n H2O + a microtubule = n ADP + n phosphate + (n+1) alpha/beta tubulin heterodimers.. ATP-dependent microtubule severing protein that specifically recognizes and cuts microtubules that are polyglutamylated. Preferentially recognizes and acts on microtubules decorated with short polyglutamate tails: severing activity increases as the number of glutamates per tubulin rises from one to eight, but decreases beyond this glutamylation threshold. Microtubule severing promotes reorganization of cellular microtubule arrays and the release of microtubules from the centrosome following nucleation. Required for membrane traffic from the endoplasmic reticulum (ER) to the Golgi and for completion of the abscission stage of cytokinesis. Also plays a role in axon growth and the formation of axonal branches. The sequence is that of Spastin from Xenopus tropicalis (Western clawed frog).